A 198-amino-acid polypeptide reads, in one-letter code: Recombination protein RecR (198 aa).

Residues 57 to 72 (CSICGNLTESDPCAIC) form a C4-type zinc finger. Positions 80-175 (TTILVVEESK…KVTRLAHGLA (96 aa)) constitute a Toprim domain.

Belongs to the RecR family.

In terms of biological role, may play a role in DNA repair. It seems to be involved in an RecBC-independent recombinational process of DNA repair. It may act with RecF and RecO. This chain is Recombination protein RecR, found in Lactococcus lactis subsp. cremoris (strain SK11).